We begin with the raw amino-acid sequence, 426 residues long: MLTIKDVHALEVMDSRGNPTIQASVILSDNTKASAIVPSGASTGKREALELRDNDKTRFLGKGVLRACENVNSVIKHHLIGLEAINQAFVDERLRALDGTPNYANLGANAVLGVSMALARASAKALNLPLYRYLGGANALTLPVPMLNIINGGTHANNSIDFQEYMIMPLGFESFREALRASAEVYHTLKKLLDGKNQLTSVGDEGGFAPNFNNNVEPLEVISQAIEKAGYKLGEEIALALDVASSELVDENFNYHLKGENKILDSHELVAYYKKFVAKYPIVSIEDGLSEDDWEGWAFLSKELGRQIQLVGDDLFVTNASLLQKGIEKNIANAILIKPNQIGTISETLETIRLAKHHAYQCVMSHRSGESEDSFIADFAVALNTGEIKTGSTARSERIAKYNRLLEIEHELKGGIYIGKELFKHG.

Glutamine 163 is a binding site for (2R)-2-phosphoglycerate. Glutamate 205 (proton donor) is an active-site residue. The Mg(2+) site is built by aspartate 242, glutamate 286, and aspartate 313. 4 residues coordinate (2R)-2-phosphoglycerate: lysine 338, arginine 367, serine 368, and lysine 389. Lysine 338 acts as the Proton acceptor in catalysis.

This sequence belongs to the enolase family. Requires Mg(2+) as cofactor.

It localises to the cytoplasm. Its subcellular location is the secreted. The protein resides in the cell surface. It catalyses the reaction (2R)-2-phosphoglycerate = phosphoenolpyruvate + H2O. It participates in carbohydrate degradation; glycolysis; pyruvate from D-glyceraldehyde 3-phosphate: step 4/5. Catalyzes the reversible conversion of 2-phosphoglycerate (2-PG) into phosphoenolpyruvate (PEP). It is essential for the degradation of carbohydrates via glycolysis. The protein is Enolase of Helicobacter pylori (strain Shi470).